The sequence spans 182 residues: uncharacterized protein (182 aa).

BNR repeat units follow at residues W58–T69 and Y102–A113.

This is an uncharacterized protein from Saccharomyces cerevisiae (strain ATCC 204508 / S288c) (Baker's yeast).